Here is a 217-residue protein sequence, read N- to C-terminus: 3-demethoxyubiquinol 3-hydroxylase (217 aa).

Glu-66, Glu-96, His-99, Glu-148, Glu-180, and His-183 together coordinate Fe cation.

The protein belongs to the COQ7 family. Requires Fe cation as cofactor.

Its subcellular location is the cell membrane. It carries out the reaction a 5-methoxy-2-methyl-3-(all-trans-polyprenyl)benzene-1,4-diol + AH2 + O2 = a 3-demethylubiquinol + A + H2O. Its pathway is cofactor biosynthesis; ubiquinone biosynthesis. Functionally, catalyzes the hydroxylation of 2-nonaprenyl-3-methyl-6-methoxy-1,4-benzoquinol during ubiquinone biosynthesis. This is 3-demethoxyubiquinol 3-hydroxylase from Xanthomonas euvesicatoria pv. vesicatoria (strain 85-10) (Xanthomonas campestris pv. vesicatoria).